Here is a 547-residue protein sequence, read N- to C-terminus: Cdc42-interacting protein 4 (547 aa).

The interval 1-117 (MDWGTELWDQ…EMKQERKMHF (117 aa)) is required for translocation to the plasma membrane in response to insulin, podosome formation and interaction with AKAP9 and microtubules. Residues 1 to 264 (MDWGTELWDQ…AAESVDAKND (264 aa)) enclose the F-BAR domain. Residues 67–259 (FSQQQSFVQL…EGMKVAAESV (193 aa)) are a coiled coil. Positions 293-483 (RVPSDSSLGT…YTEFDEDFEE (191 aa)) are interaction with CDC42. An interaction with PDE6G region spans residues 293-547 (RVPSDSSLGT…PTSYLRVTLN (255 aa)). The interval 294–323 (VPSDSSLGTPDGRPELRAASSRSRAKRWPF) is disordered. Ser-296, Ser-298, and Ser-299 each carry phosphoserine. Positions 332–425 (TEDFSHLPPE…ESRVLSNRGD (94 aa)) form a coiled coil. Positions 337–414 (HLPPEQQRKR…VQKYEAWLAE (78 aa)) constitute an REM-1 domain. The interval 415–547 (AESRVLSNRG…PTSYLRVTLN (133 aa)) is required for interaction with FASLG and localization to lysosomes. Residues 420 to 485 (LSNRGDSLSR…EFDEDFEEPA (66 aa)) are disordered. Ser-426 carries the phosphoserine modification. The interval 431-487 (TRPPDPPTTAPPDSSSSSNNSGSQDNKESSEEPPSEEGQDTPIYTEFDEDFEEPASP) is interaction with DNM2 and WASL. Positions 441-451 (PPDSSSSSNNS) are enriched in low complexity. The tract at residues 476-547 (EFDEDFEEPA…PTSYLRVTLN (72 aa)) is interaction with DNM1 and WASL. Residues 484–547 (PASPIGQCVA…PTSYLRVTLN (64 aa)) form a required for podosome formation region. The region spanning 486–547 (SPIGQCVAIY…PTSYLRVTLN (62 aa)) is the SH3 domain. The tract at residues 490–547 (QCVAIYHFEGSSEGTVSMSEGEDLSLMEEDKGDGWTRVRRKQGGEGYVPTSYLRVTLN) is interaction with WAS. The interaction with ARHGAP17, DAAM1, DIAPH1 and DIAPH2 stretch occupies residues 492 to 547 (VAIYHFEGSSEGTVSMSEGEDLSLMEEDKGDGWTRVRRKQGGEGYVPTSYLRVTLN).

The protein belongs to the FNBP1 family. As to quaternary structure, homodimerizes, the dimers can polymerize end-to-end to form filamentous structures. Interacts specifically with GTP-bound CDC42 and RHOQ. Interacts with AKAP9, ARHGAP17, DAAM1, DIAPH1, DIAPH2, DNM1, DNM2, FASLG/FASL, GAPVD1, LYN, microtubules, SRC, WAS/WASP and WASL/N-WASP. Interacts with the ligand binding domain of the thyroid receptor (TR) in the presence of thyroid hormone. May interact with CTNNB1 and HD/HTT. Interacts with PDE6G. In terms of tissue distribution, expressed in adrenal gland, aorta, brain, heart, kidney, liver, skeletal muscle and spleen.

It is found in the cytoplasm. Its subcellular location is the cytoskeleton. The protein resides in the cell cortex. It localises to the lysosome. The protein localises to the golgi apparatus. It is found in the cell membrane. Its subcellular location is the cell projection. The protein resides in the phagocytic cup. In terms of biological role, required to coordinate membrane tubulation with reorganization of the actin cytoskeleton during endocytosis. Also acts as a link between CDC42 signaling and regulation of the actin cytoskeleton. Binds to lipids such as phosphatidylinositol 4,5-bisphosphate and phosphatidylserine and promotes membrane invagination and the formation of tubules. Also enhances actin polymerization in the vicinity of membrane tubules by recruiting WASL/N-WASP which in turn activates the Arp2/3 complex. Actin polymerization and dynamin may promote the fission of membrane tubules to form endocytic vesicles. Required for the formation of podosomes, actin-rich adhesion structures specific to monocyte-derived cells. Required for translocation of GLUT4 to the plasma membrane in response to insulin signaling. May be required for the lysosomal retention of FASLG/FASL. The chain is Cdc42-interacting protein 4 (Trip10) from Rattus norvegicus (Rat).